Here is a 922-residue protein sequence, read N- to C-terminus: Cell surface glycoprotein 2 (922 aa).

The signal sequence occupies residues 1–23 (MTGNSDKVRSLFLTALMVFSVFA). 7 N-linked (GlcNAc...) asparagine glycosylation sites follow: Asn-37, Asn-56, Asn-110, Asn-220, Asn-251, Asn-262, and Asn-292. Asn-307 carries N-linked (GalNAc...) asparagine glycosylation. Asn-319, Asn-344, Asn-396, Asn-437, Asn-490, Asn-523, Asn-557, Asn-574, Asn-587, Asn-616, Asn-700, Asn-717, Asn-809, Asn-838, and Asn-847 each carry an N-linked (GlcNAc...) asparagine glycan. Positions 816–899 (PHQDTNGNEE…GTETTEAEGP (84 aa)) are disordered. A compositionally biased stretch (polar residues) spans 835-850 (YTQNGSAVTDSANVTV). The span at 853 to 887 (EEPEDTPEDTPEDTPEDTPEDTPEDTPADTPEDTP) shows a compositional bias: acidic residues. Residues 888 to 899 (DTGTETTEAEGP) are compositionally biased toward low complexity. The chain crosses the membrane as a helical span at residues 898 to 918 (GPGFTAAIALIALVAAALLAV). Positions 899–901 (PGF) match the PGF sorting signal motif.

The protein belongs to the halobacterial S-layer protein family. N-glycosylated on Asn-307; this N-linked glycan is a branched trisaccharide containing 2-amino-6-sulfo-2,6-dideoxy-glucose (sulfoquinovosamine). Post-translationally, O-glycosylated on Thr residues within the DTPE repeats in the C-terminal region; glycans consist of Glc-Gal disaccharides. In terms of processing, cleaved by the archaeosortase ArtA at the C-terminus, with removal of a short hydrophobic segment. Lipidation.

It localises to the secreted. The protein resides in the cell wall. It is found in the S-layer. Its subcellular location is the cell membrane. S-layer protein. The S-layer is a paracrystalline mono-layered assembly of proteins which coat the surface of the cell. In H.hispanica, the S-layer contains two different glycoproteins, Slg1 and Slg2, which share highly similar amino acid sequences. This chain is Cell surface glycoprotein 2, found in Haloarcula hispanica (strain ATCC 33960 / DSM 4426 / JCM 8911 / NBRC 102182 / NCIMB 2187 / VKM B-1755).